The chain runs to 487 residues: Selenium-binding protein 2 (487 aa).

N-acetylalanine is present on Ala-2. Positions 19 and 20 each coordinate selenite.

This sequence belongs to the selenium-binding protein family. As to expression, mostly expressed in seedlings, leaves and stems, and, to a lower extent, in flowers and roots.

In terms of biological role, required for the fusion of female gametophyte polar nuclei. This is Selenium-binding protein 2 (SBP2) from Arabidopsis thaliana (Mouse-ear cress).